The primary structure comprises 71 residues: MPITSKYSDEHVESILTEIAAVLNKHNASPELTLMVVGNIATNVINQNVAAAQRKVIAEKFAQALVSSLQS.

It belongs to the UPF0352 family.

The chain is UPF0352 protein VCM66_1964 from Vibrio cholerae serotype O1 (strain M66-2).